Consider the following 237-residue polypeptide: DCN1-like protein 5 (237 aa).

Phosphoserine is present on residues Ser9, Ser41, and Ser48. The DCUN1 domain occupies 46-232 (FSSKKCLAWF…LLDEFVEWQK (187 aa)).

Part of a complex that contains DCUN1D5, CUL1 and RBX1; this interaction is bridged by CUL1. Interacts (via the DCUN1 domain) with the unneddylated cullins: interacts with CUL1, CUL2, CUL3, CUL4A, CUL4B and CUL5; these interactions promote the cullin neddylation and the identity of the cullin dictates the affinity of the interaction. Interacts (via DCUN1 domain) with UBE2M (N-terminally acetylated form) and probably with UBE2F (N-terminally acetylated form). May also interact with regulators or subunits of cullin-RING ligases such as RBX1, RNF7, ELOB and DDB1; these interactions are bridged by cullins. Interacts with CAND1; this interaction is bridged by cullins and strongly inhibits the neddylation of cullins. These CAND-cullin-DCNL complexes can only be neddylated in the presence of a substrate adapter. In terms of processing, phosphorylation at Ser-41 is independent of cullin's interaction. Phosphorylated in response to both TICAM1 and MYD88 dependent Toll-like receptor (TLR) pathway activation. Phosphorylated in response to IL1B stimulation.

The protein resides in the nucleus. Its subcellular location is the cytoplasm. It is found in the cytoskeleton. It localises to the spindle. In terms of biological role, contributes to the neddylation of all cullins by transferring NEDD8 from N-terminally acetylated NEDD8-conjugating E2s enzyme to different cullin C-terminal domain-RBX complexes which is necessary for the activation of cullin-RING E3 ubiquitin ligases (CRLs). May play a role in DNA damage response and may participate in cell proliferation and anchorage-independent cell growth. In Pongo abelii (Sumatran orangutan), this protein is DCN1-like protein 5.